The primary structure comprises 273 residues: N(omega)-hydroxy-L-arginine amidinohydrolase (273 aa).

Positions 109, 111, 113, 198, and 200 each coordinate Mn(2+).

It belongs to the arginase family. Mn(2+) is required as a cofactor.

It catalyses the reaction N(omega)-hydroxy-L-arginine + H2O = hydroxyurea + L-ornithine. Its function is as follows. Involved in the biosynthesis of the antibiotic D-cycloserine (DCS), a cyclic structural analog of D-alanine, used as an antitubercular agent. Catalyzes the hydrolysis of N(omega)-hydroxy-L-arginine (NHA) to yield hydroxyurea (HU) and L-ornithine. The chain is N(omega)-hydroxy-L-arginine amidinohydrolase from Streptomyces lavendulae.